Reading from the N-terminus, the 214-residue chain is ATP-dependent Clp protease proteolytic subunit (214 aa).

Ser-113 functions as the Nucleophile in the catalytic mechanism. Residue His-138 is part of the active site.

Belongs to the peptidase S14 family. Fourteen ClpP subunits assemble into 2 heptameric rings which stack back to back to give a disk-like structure with a central cavity, resembling the structure of eukaryotic proteasomes.

Its subcellular location is the cytoplasm. The catalysed reaction is Hydrolysis of proteins to small peptides in the presence of ATP and magnesium. alpha-casein is the usual test substrate. In the absence of ATP, only oligopeptides shorter than five residues are hydrolyzed (such as succinyl-Leu-Tyr-|-NHMec, and Leu-Tyr-Leu-|-Tyr-Trp, in which cleavage of the -Tyr-|-Leu- and -Tyr-|-Trp bonds also occurs).. Functionally, cleaves peptides in various proteins in a process that requires ATP hydrolysis. Has a chymotrypsin-like activity. Plays a major role in the degradation of misfolded proteins. This chain is ATP-dependent Clp protease proteolytic subunit, found in Teredinibacter turnerae (strain ATCC 39867 / T7901).